The sequence spans 544 residues: Chaperonin GroEL (544 aa).

ATP is bound by residues T30–P33, K51, D87–T91, G415, D478–A480, and D494. Residues P524–Y544 are disordered. The segment covering G535–Y544 has biased composition (gly residues).

The protein belongs to the chaperonin (HSP60) family. Forms a cylinder of 14 subunits composed of two heptameric rings stacked back-to-back. Interacts with the co-chaperonin GroES.

It is found in the cytoplasm. The enzyme catalyses ATP + H2O + a folded polypeptide = ADP + phosphate + an unfolded polypeptide.. In terms of biological role, together with its co-chaperonin GroES, plays an essential role in assisting protein folding. The GroEL-GroES system forms a nano-cage that allows encapsulation of the non-native substrate proteins and provides a physical environment optimized to promote and accelerate protein folding. The chain is Chaperonin GroEL from Methylacidiphilum infernorum (isolate V4) (Methylokorus infernorum (strain V4)).